We begin with the raw amino-acid sequence, 1099 residues long: Inverted formin-2 (1099 aa).

The GBD/FH3 domain maps to 1–330 (MSLTEGAHTK…RAVLLADDCQ (330 aa)). Composition is skewed to basic and acidic residues over residues 348-359 (SSKEKRKTDKCT) and 367-385 (QTDKPKEESCEGKTVKKDP). Disordered regions lie at residues 348–391 (SSKE…SGIP), 432–509 (PSPP…PTPP), and 1000–1019 (AEKRKQQIADEETKRQKGEN). The FH1 domain occupies 426–569 (TCSSVLPSPP…GMLPPPPPLP (144 aa)). Positions 452 to 499 (PLPPPPPPLPGTELSPPPPGMVALSLPPPPPPLPGMGGMLPPPPPPLP) are enriched in pro residues. Residues 621–1009 (FLKVNKPTLK…AEKRKQQIAD (389 aa)) enclose the FH2 domain. The stretch at 907-1019 (LKKLRDLQNK…EETKRQKGEN (113 aa)) forms a coiled coil. Residues 1037-1052 (DDLLADIKKGFQLRKT) form the WH2 domain. The interval 1064-1085 (KTLSSETNRTDIQHVGKRPEVP) is disordered. A compositionally biased stretch (basic and acidic residues) spans 1071-1083 (NRTDIQHVGKRPE).

This sequence belongs to the formin homology family.

This Xenopus laevis (African clawed frog) protein is Inverted formin-2 (inf2).